We begin with the raw amino-acid sequence, 105 residues long: Prothymosin alpha-A (105 aa).

The span at 1-30 (MADTKVDTSKEVSAKDLKEKKQVEEAENGK) shows a compositional bias: basic and acidic residues. The segment at 1–105 (MADTKVDTSK…VDPKKQKTDV (105 aa)) is disordered. Acidic residues-rich tracts occupy residues 39–78 (ENEE…EEAE) and 87–96 (EDDDDDEDDV).

This sequence belongs to the pro/parathymosin family. As to expression, at the 20-somite stage (18 hpf), expressed on the dorsal side of the embryo in the developing central and peripheral nervous system (CNS and PNS), in the tail bud and the pronephric ducts. In the PNS, expressed in the otic vesicle, trigeminal ganglion and the anterior lateral line placode. Localized throughout the hindbrain, with highest expression in rhombomeres 3 and 4. In the head, expressed in the olfactory placode and in the diencephalic region. At the end of the segmentation period (20 hpf), expression begins in the newly forming endodermal pouches, and weakly in the pharyngeal arch precursor cells. During the early pharyngula period, expressed in the pectoral fin bud, the developing retina, and still present in the central nervous system and endodermal pouches. In the tail, expressed in the spinal cord and posterior lateral line precursors. Weakly expressed in the pronephric ducts, only in the corpuscles of Stanius. At 48 hpf, still expressed in the retina and brain, where expression is almost uniform. At this stage, expression is decreased in the spinal cord and is absent from the lateral line cells and pronephric ducts, but appears in the intestine and continues in the pharyngeal arches. In 72 hpf embryos, expression in the brain remains uniform but is restricted to amacrine cells in the retina. In the pharyngeal arches, expression continues to be limited to the ectodermal and endodermal covering cells.

It localises to the nucleus. This is Prothymosin alpha-A (ptmaa) from Danio rerio (Zebrafish).